The sequence spans 536 residues: SNW domain-containing protein 1 (536 aa).

Residues 1–46 (MALTSFLPAPTQLSQDQLEAEEKARSQRSRQTSLVSSRREPPPYGY) form a disordered region. Residue Ala2 is modified to N-acetylalanine. Ser14 is modified (phosphoserine). Lys23 participates in a covalent cross-link: Glycyl lysine isopeptide (Lys-Gly) (interchain with G-Cter in SUMO2). The interval 59–79 (GDGGAFPEIHVAQYPLDMGRK) is interaction with PPIL1. Residues Lys81, Lys97, Lys115, Lys122, Lys141, Lys158, and Lys170 each participate in a glycyl lysine isopeptide (Lys-Gly) (interchain with G-Cter in SUMO2) cross-link. Residues 174–339 (AQYIRYTPSQ…KARERRAGIK (166 aa)) form an SNW region. A phosphoserine mark is found at Ser182 and Ser190. Lys193 participates in a covalent cross-link: Glycyl lysine isopeptide (Lys-Gly) (interchain with G-Cter in SUMO2). Residues 209–233 (PPRFKINKKIPRGPPSPPAPVMHSP) are disordered. Phosphoserine occurs at positions 224, 232, and 234. Residues Lys240, Lys258, Lys286, Lys339, Lys344, Lys416, and Lys441 each participate in a glycyl lysine isopeptide (Lys-Gly) (interchain with G-Cter in SUMO2) cross-link. Residues 311-386 (KMAQKEKEKH…RSKLQRNENR (76 aa)) form a disordered region. Ser446 bears the Phosphoserine mark. Lys452 participates in a covalent cross-link: Glycyl lysine isopeptide (Lys-Gly) (interchain with G-Cter in SUMO2). 2 stretches are compositionally biased toward basic and acidic residues: residues 470–489 (NRFV…RGRE) and 503–530 (KFLE…EHEG). The tract at residues 470–536 (NRFVPDKEFS…EHEGKKRRKE (67 aa)) is disordered. Phosphoserine occurs at positions 479 and 481. Residue Lys509 forms a Glycyl lysine isopeptide (Lys-Gly) (interchain with G-Cter in SUMO2) linkage.

This sequence belongs to the SNW family. In terms of assembly, identified in the spliceosome C complex. Associates with U4/U6-U5 tri-small nuclear ribonucleoproteins (U4/U6-U5 tri-snRNPs). Component of the minor spliceosome, which splices U12-type introns. Interacts with SKI, SMAD2,SMAD3, RBPJ, RB1, PABPN1, MAGEA1, SIRT1, FOXN3, U2AF2, DAXX and ATP1B4. Interacts with PPIL1. Interacts with VDR and RXRA; preferentially associates with VDR:RXRA heterodimers. Interacts with NCOR2. Interacts with MAML1. Interacts with NOTCH1 NICD; the interaction involves multimerized NOTCH1 NICD. Forms a complex with NOTCH1 NICD and MAML1; the association is dissociated by RBPJ. Associates with positive transcription elongation factor b (P-TEFb). Component of the SNARP complex which consists at least of SNIP1, SNW1, THRAP3, BCLAF1 and PNN. As to quaternary structure, (Microbial infection) Interacts with human papillomavirus type-16 (HPV16) E7 protein. (Microbial infection) Interacts with EBV EBNA2; EBNA2 competes with NCOR2 for interaction with SNW1.

Its subcellular location is the nucleus. In terms of biological role, involved in pre-mRNA splicing as component of the spliceosome. As a component of the minor spliceosome, involved in the splicing of U12-type introns in pre-mRNAs. Required for the specific splicing of CDKN1A pre-mRNA; the function probably involves the recruitment of U2AF2 to the mRNA. May recruit PPIL1 to the spliceosome. May be involved in cyclin-D1/CCND1 mRNA stability through the SNARP complex which associates with both the 3'end of the CCND1 gene and its mRNA. Involved in transcriptional regulation. Modulates TGF-beta-mediated transcription via association with SMAD proteins, MYOD1-mediated transcription via association with PABPN1, RB1-mediated transcriptional repression, and retinoid-X receptor (RXR)- and vitamin D receptor (VDR)-dependent gene transcription in a cell line-specific manner probably involving coactivators NCOA1 and GRIP1. Is involved in NOTCH1-mediated transcriptional activation. Binds to multimerized forms of Notch intracellular domain (NICD) and is proposed to recruit transcriptional coactivators such as MAML1 to form an intermediate preactivation complex which associates with DNA-bound CBF-1/RBPJ to form a transcriptional activation complex by releasing SNW1 and redundant NOTCH1 NICD. Functionally, (Microbial infection) Is recruited by HIV-1 Tat to Tat:P-TEFb:TAR RNA complexes and is involved in Tat transcription by recruitment of MYC, MEN1 and TRRAP to the HIV promoter. Its function is as follows. (Microbial infection) Proposed to be involved in transcriptional activation by EBV EBNA2 of CBF-1/RBPJ-repressed promoters. The chain is SNW domain-containing protein 1 (SNW1) from Homo sapiens (Human).